Here is a 104-residue protein sequence, read N- to C-terminus: Pole-localizer protein TmaR (104 aa).

2 coiled-coil regions span residues arginine 13–aspartate 43 and serine 76–glutamate 96.

Belongs to the pole-localizer TmaR family.

Its subcellular location is the cytoplasm. Pole-localizer protein involved in the regulation of several cellular processes. This Vibrio vulnificus (strain CMCP6) protein is Pole-localizer protein TmaR.